Reading from the N-terminus, the 165-residue chain is ATP synthase subunit b (165 aa).

A helical membrane pass occupies residues 11–31 (LIFWTIVNFLLLVFLLGKFAW).

This sequence belongs to the ATPase B chain family. In terms of assembly, F-type ATPases have 2 components, F(1) - the catalytic core - and F(0) - the membrane proton channel. F(1) has five subunits: alpha(3), beta(3), gamma(1), delta(1), epsilon(1). F(0) has three main subunits: a(1), b(2) and c(10-14). The alpha and beta chains form an alternating ring which encloses part of the gamma chain. F(1) is attached to F(0) by a central stalk formed by the gamma and epsilon chains, while a peripheral stalk is formed by the delta and b chains.

Its subcellular location is the cell membrane. In terms of biological role, f(1)F(0) ATP synthase produces ATP from ADP in the presence of a proton or sodium gradient. F-type ATPases consist of two structural domains, F(1) containing the extramembraneous catalytic core and F(0) containing the membrane proton channel, linked together by a central stalk and a peripheral stalk. During catalysis, ATP synthesis in the catalytic domain of F(1) is coupled via a rotary mechanism of the central stalk subunits to proton translocation. Component of the F(0) channel, it forms part of the peripheral stalk, linking F(1) to F(0). The protein is ATP synthase subunit b of Elusimicrobium minutum (strain Pei191).